Consider the following 98-residue polypeptide: HssA/B-like protein 36 (98 aa).

The interval 1 to 29 (MTLFSSISSISNPMTSSKSSISSFGSGTS) is disordered.

The protein belongs to the hssA/B family.

The sequence is that of HssA/B-like protein 36 (hssl36) from Dictyostelium discoideum (Social amoeba).